The primary structure comprises 623 residues: tRNA uridine 5-carboxymethylaminomethyl modification enzyme MnmG (623 aa).

12-17 serves as a coordination point for FAD; it reads GAGHAG. Residue 272–286 coordinates NAD(+); that stretch reads GPRYCPSIEDKINRF.

Belongs to the MnmG family. As to quaternary structure, homodimer. Heterotetramer of two MnmE and two MnmG subunits. FAD serves as cofactor.

The protein resides in the cytoplasm. NAD-binding protein involved in the addition of a carboxymethylaminomethyl (cmnm) group at the wobble position (U34) of certain tRNAs, forming tRNA-cmnm(5)s(2)U34. The sequence is that of tRNA uridine 5-carboxymethylaminomethyl modification enzyme MnmG from Flavobacterium johnsoniae (strain ATCC 17061 / DSM 2064 / JCM 8514 / BCRC 14874 / CCUG 350202 / NBRC 14942 / NCIMB 11054 / UW101) (Cytophaga johnsonae).